Reading from the N-terminus, the 242-residue chain is 1-(5-phosphoribosyl)-5-[(5-phosphoribosylamino)methylideneamino] imidazole-4-carboxamide isomerase (242 aa).

Aspartate 10 (proton acceptor) is an active-site residue.

This sequence belongs to the HisA/HisF family.

Its subcellular location is the cytoplasm. It carries out the reaction 1-(5-phospho-beta-D-ribosyl)-5-[(5-phospho-beta-D-ribosylamino)methylideneamino]imidazole-4-carboxamide = 5-[(5-phospho-1-deoxy-D-ribulos-1-ylimino)methylamino]-1-(5-phospho-beta-D-ribosyl)imidazole-4-carboxamide. It participates in amino-acid biosynthesis; L-histidine biosynthesis; L-histidine from 5-phospho-alpha-D-ribose 1-diphosphate: step 4/9. This Corynebacterium diphtheriae (strain ATCC 700971 / NCTC 13129 / Biotype gravis) protein is 1-(5-phosphoribosyl)-5-[(5-phosphoribosylamino)methylideneamino] imidazole-4-carboxamide isomerase.